A 336-amino-acid polypeptide reads, in one-letter code: Deoxyhypusine hydroxylase (336 aa).

HEAT-like PBS-type repeat units lie at residues 68–94 (LKHELAYCLGQTRNTDALPFLLDVVQD) and 101–127 (CRHEAAEALGALGYESSLEVLKALRDN). His70, Glu71, His103, and Glu104 together coordinate Fe cation. The segment at 158 to 179 (LKPSDFTSIDPAPPMPLTAKEP) is disordered. HEAT-like PBS-type repeat units follow at residues 235–261 (FRHEIAFVFGQLCHPASVPSLTETLSD) and 268–295 (VRHEAAEALGSLGDVEGVEDTLKKFLND). Fe cation contacts are provided by His237, Glu238, His270, and Glu271.

The protein belongs to the deoxyhypusine hydroxylase family. The cofactor is Fe(2+).

Its subcellular location is the cytoplasm. It localises to the nucleus. The enzyme catalyses [eIF5A protein]-deoxyhypusine + AH2 + O2 = [eIF5A protein]-hypusine + A + H2O. Its pathway is protein modification; eIF5A hypusination. Catalyzes the hydroxylation of the N(6)-(4-aminobutyl)-L-lysine intermediate to form hypusine, an essential post-translational modification only found in mature eIF-5A factor. This Emericella nidulans (strain FGSC A4 / ATCC 38163 / CBS 112.46 / NRRL 194 / M139) (Aspergillus nidulans) protein is Deoxyhypusine hydroxylase (lia1).